A 234-amino-acid chain; its full sequence is 1-(5-phosphoribosyl)-5-[(5-phosphoribosylamino)methylideneamino] imidazole-4-carboxamide isomerase (234 aa).

Asp9 (proton acceptor) is an active-site residue. Catalysis depends on Asp131, which acts as the Proton donor.

Belongs to the HisA/HisF family.

It is found in the cytoplasm. It carries out the reaction 1-(5-phospho-beta-D-ribosyl)-5-[(5-phospho-beta-D-ribosylamino)methylideneamino]imidazole-4-carboxamide = 5-[(5-phospho-1-deoxy-D-ribulos-1-ylimino)methylamino]-1-(5-phospho-beta-D-ribosyl)imidazole-4-carboxamide. It functions in the pathway amino-acid biosynthesis; L-histidine biosynthesis; L-histidine from 5-phospho-alpha-D-ribose 1-diphosphate: step 4/9. The sequence is that of 1-(5-phosphoribosyl)-5-[(5-phosphoribosylamino)methylideneamino] imidazole-4-carboxamide isomerase from Staphylococcus aureus (strain JH1).